The chain runs to 151 residues: MAKRVKVVLTESIATLGRDGDVVEVAPGYARNYLLPFGKASNVTPSILKQIERKRAKEKIAAEKLKQEAIDFKTALTTIGRFTIKKQVGEDGVLFGTVTNGDVAEAIQSATKKDIDRRDITVPDIHNLGSFVAKIKLHQEVSAEVNIEVTS.

The protein belongs to the bacterial ribosomal protein bL9 family.

In terms of biological role, binds to the 23S rRNA. This chain is Large ribosomal subunit protein bL9, found in Prochlorococcus marinus (strain MIT 9515).